Reading from the N-terminus, the 503-residue chain is ATP synthase subunit beta (503 aa).

157–164 (GGAGVGKT) is a binding site for ATP.

Belongs to the ATPase alpha/beta chains family. In terms of assembly, F-type ATPases have 2 components, CF(1) - the catalytic core - and CF(0) - the membrane proton channel. CF(1) has five subunits: alpha(3), beta(3), gamma(1), delta(1), epsilon(1). CF(0) has three main subunits: a(1), b(2) and c(9-12). The alpha and beta chains form an alternating ring which encloses part of the gamma chain. CF(1) is attached to CF(0) by a central stalk formed by the gamma and epsilon chains, while a peripheral stalk is formed by the delta and b chains.

Its subcellular location is the cell membrane. The catalysed reaction is ATP + H2O + 4 H(+)(in) = ADP + phosphate + 5 H(+)(out). Its function is as follows. Produces ATP from ADP in the presence of a proton gradient across the membrane. The catalytic sites are hosted primarily by the beta subunits. This Christiangramia forsetii (strain DSM 17595 / CGMCC 1.15422 / KT0803) (Gramella forsetii) protein is ATP synthase subunit beta.